The sequence spans 452 residues: UPF0210 protein Hore_14430 (452 aa).

Belongs to the UPF0210 family. Homodimer.

The polypeptide is UPF0210 protein Hore_14430 (Halothermothrix orenii (strain H 168 / OCM 544 / DSM 9562)).